A 374-amino-acid chain; its full sequence is MLTIIADSNIAHLHDYFNEQTLNHPIQVISMAGRDITADALQQYQPDVLLIRSVTQIDAKLLDTNQSVKFIGSATIGTDHVNEGYVSLRGMRFVNAAGCSKHSVAQYVMSAILQLRPEYWASNTSQSDKPVKLGIIGLGNIGSTLARYALDLGWEVLGYDPFQSASVINNASVEKVLAQSDVISLHVPLTLTGHSELPTYHMIDADALAKMPSTTMLINTSRGAVVSEADLLADLNQNPERQVVLDVFENEPTVSAELLDKLTLATPHIAGYTLEGKLRGTQMIFDAFVRSYGEKGADILSIKETDLMADLLPDNPYQWQQLKANPQKLAEFYDIKADDRQLRDSVNEQAGAVLGTDFDALRKNYTLRREWLFD.

Serine 53 and threonine 75 together coordinate substrate. Aspartate 160 is a binding site for NAD(+). Arginine 222 is an active-site residue. Residue aspartate 246 participates in NAD(+) binding. Residue glutamate 251 is part of the active site. The active-site Proton donor is the histidine 268. Residue glycine 271 coordinates NAD(+). Tyrosine 272 is a substrate binding site.

This sequence belongs to the D-isomer specific 2-hydroxyacid dehydrogenase family. PdxB subfamily. In terms of assembly, homodimer.

It localises to the cytoplasm. The enzyme catalyses 4-phospho-D-erythronate + NAD(+) = (R)-3-hydroxy-2-oxo-4-phosphooxybutanoate + NADH + H(+). It participates in cofactor biosynthesis; pyridoxine 5'-phosphate biosynthesis; pyridoxine 5'-phosphate from D-erythrose 4-phosphate: step 2/5. Catalyzes the oxidation of erythronate-4-phosphate to 3-hydroxy-2-oxo-4-phosphonooxybutanoate. In Psychrobacter sp. (strain PRwf-1), this protein is Erythronate-4-phosphate dehydrogenase.